Reading from the N-terminus, the 764-residue chain is Polyribonucleotide nucleotidyltransferase (764 aa).

Aspartate 541 and aspartate 547 together coordinate Mg(2+). In terms of domain architecture, KH spans 607-666 (PRVTAIKIPVDKIGEVIGPKGKVINQITEDTGANISIEDDGTVFVGATDGPSAQAAIDAI). One can recognise an S1 motif domain in the interval 678-747 (GERFLGTVVK…NRGKISLVPV (70 aa)).

This sequence belongs to the polyribonucleotide nucleotidyltransferase family. It depends on Mg(2+) as a cofactor.

It localises to the cytoplasm. It carries out the reaction RNA(n+1) + phosphate = RNA(n) + a ribonucleoside 5'-diphosphate. Involved in mRNA degradation. Catalyzes the phosphorolysis of single-stranded polyribonucleotides processively in the 3'- to 5'-direction. The chain is Polyribonucleotide nucleotidyltransferase from Nocardia farcinica (strain IFM 10152).